The sequence spans 663 residues: Protein associated with UVRAG as autophagy enhancer (663 aa).

2 disordered regions span residues 1 to 36 and 65 to 136; these read MVSQ…LDTE and DASP…EERA. Polar residues-rich tracts occupy residues 80-93 and 105-130; these read TASN…TSPL and PKGT…SSVT. The interval 196-235 is interaction with UVRAG; it reads EAFVLPVDAEKENAHFYVADMIISVMEKMKCNILSQQHTE. An N6-acetyllysine mark is found at lysine 484, lysine 534, lysine 574, and lysine 634.

In terms of assembly, interacts with UVRAG; the interaction is direct and promotes association with the PI3K/PI3KC3 and HOPS complexes. Interacts with STX17. Post-translationally, acetylated by KAT5/TIP60 under autophagy induction, promoting autophagosome maturation and lipid metabolism. Lys-484 and Lys-574 constitute the key sites for tuning function in autophagy.

Its subcellular location is the cytoplasmic vesicle. It is found in the autophagosome membrane. Functionally, regulator of autophagy that promotes autophagosome maturation by facilitating the biogenesis of phosphatidylinositol 3-phosphate (PtdIns(3)P) in late steps of autophagy. Acts by antagonizing RUBCN, thereby stimulating phosphatidylinositol 3-kinase activity of the PI3K/PI3KC3 complex. Following anchorage to the autophagosomal SNARE STX17, promotes the recruitment of PI3K/PI3KC3 and HOPS complexes to the autophagosome to regulate the fusion specificity of autophagosomes with late endosomes/lysosomes. Binds phosphoinositides phosphatidylinositol 3-phosphate (PtdIns(3)P), 4-phosphate (PtdIns(4)P) and 5-phosphate (PtdIns(5)P). In addition to its role in autophagy, acts as a regulator of lipid and glycogen homeostasis. May act as a tumor suppressor. This chain is Protein associated with UVRAG as autophagy enhancer, found in Bos taurus (Bovine).